The sequence spans 677 residues: MTQVAKKILVTCALPYANGSIHLGHMLEHIQADVWVRYQRMRGHQVNFICADDAHGTPIMLKAQQLGISPEQMITEMSQEHQTDFAGFDISYDNYHSTHSDENRELSELIYTRLKENGFIKNRTISQLFDPEKGMFLPDRFVKGTCPKCKSPDQYGDNCEVCGATYSPTELIEPKSVVSGATPVMRDSEHFFFDLPSFSEMLQAWTRSGALQEQVANKMQEWFESGLQQWDISRDAPYFGFEIPDAPGKYFYVWLDAPIGYMGSFKNLCDKRGDTTSFDEYWKKDSDAELYHFIGKDIVYFHSLFWPAMLEGSGFRKPTNLFVHGYVTVNGAKMSKSRGTFIKASTWLNHFDADSLRYYYTAKLSSRIDDIDLNLEDFVQRVNADIVNKVVNLASRNAGFIGKRFDGVMAAELADPALYKTFTDAATAIGEAWEAREFGKAVREIMALADLANRYVDEQAPWVVAKQEGRDADLQAICSMGINLFRVLMTYLKPVLPTLSERAEAFLNTELTWDAIQQPLLSHKVNTFKALYNRIEMKQVEALVEASKEEVKAAAAPVTGPLADEPIQETITFDDFAKVDLRVALIENAEFVEGSDKLLRLTLDLGGEKRNVFSGIRSAYPDPQVLIGRQTVMVANLAPRKMRFGISEGMVMAAGPGGKDIFLLSPDEGAKPGQQVK.

Residues 15–25 carry the 'HIGH' region motif; the sequence is PYANGSIHLGH. Residues C146, C149, C159, and C162 each coordinate Zn(2+). The 'KMSKS' region signature appears at 333–337; sequence KMSKS. K336 is a binding site for ATP. Residues 575-677 enclose the tRNA-binding domain; the sequence is DFAKVDLRVA…EGAKPGQQVK (103 aa).

It belongs to the class-I aminoacyl-tRNA synthetase family. MetG type 1 subfamily. In terms of assembly, homodimer. Requires Zn(2+) as cofactor.

Its subcellular location is the cytoplasm. It catalyses the reaction tRNA(Met) + L-methionine + ATP = L-methionyl-tRNA(Met) + AMP + diphosphate. Is required not only for elongation of protein synthesis but also for the initiation of all mRNA translation through initiator tRNA(fMet) aminoacylation. The polypeptide is Methionine--tRNA ligase (Enterobacter sp. (strain 638)).